We begin with the raw amino-acid sequence, 301 residues long: uncharacterized protein (301 aa).

The signal sequence occupies residues 1-28; sequence MFFREDKSVAFRLRSAALSGCATGQSDA.

This is an uncharacterized protein from Treponema pallidum (strain Nichols).